Here is a 281-residue protein sequence, read N- to C-terminus: CCAAT/enhancer-binding protein epsilon (281 aa).

The interval 1 to 30 is disordered; that stretch reads MSHGTYYECEPRGGQQPLEFSGGRAGPGEL. A Glycyl lysine isopeptide (Lys-Gly) (interchain with G-Cter in SUMO2) cross-link involves residue K121. Phosphoserine is present on S181. The 64-residue stretch at 204-267 folds into the bZIP domain; that stretch reads SLEYRLRRER…DTLRNLFRQI (64 aa). Residues 208–228 are basic motif; the sequence is RLRRERNNIAVRKSRDKAKRR. The leucine-zipper stretch occupies residues 230-237; it reads LETQQKVL.

It belongs to the bZIP family. C/EBP subfamily. Binds DNA as a homodimer and as a heterodimer. Can form stable heterodimers with CEBPA, CEBPB and CEBPD. Interacts with GATA1 and SPI1. Interacts with SMARCD2. Post-translationally, phosphorylated. In terms of tissue distribution, strongest expression occurs in promyelocyte and late-myeloblast-like cell lines.

It is found in the nucleus. Functionally, transcriptional activator. C/EBP are DNA-binding proteins that recognize two different motifs: the CCAAT homology common to many promoters and the enhanced core homology common to many enhancers. Required for the promyelocyte-myelocyte transition in myeloid differentiation. In Homo sapiens (Human), this protein is CCAAT/enhancer-binding protein epsilon (CEBPE).